Here is a 1028-residue protein sequence, read N- to C-terminus: Exportin-T (1028 aa).

Belongs to the exportin family.

Its subcellular location is the nucleus. It is found in the cytoplasm. TRNA nucleus export receptor which facilitates tRNA translocation across the nuclear pore complex. Involved in pre-tRNA splicing, probably by affecting the interaction of pre-tRNA with splicing endonuclease. This is Exportin-T (los1) from Aspergillus terreus (strain NIH 2624 / FGSC A1156).